A 323-amino-acid chain; its full sequence is Viral cathepsin (323 aa).

The signal sequence occupies residues 1-18; that stretch reads MSKFLLYWFVYGVVCSAA. A propeptide spans 19–112 (activation peptide); that stretch reads YDILKAPNYF…VVLDRPPGKG (94 aa). Disulfide bonds link cysteine 133–cysteine 174, cysteine 167–cysteine 207, and cysteine 262–cysteine 310. Cysteine 136 is a catalytic residue. A glycan (N-linked (GlcNAc...) asparagine; by host) is linked at asparagine 158. Catalysis depends on residues histidine 269 and asparagine 289.

The protein belongs to the peptidase C1 family. Synthesized as an inactive proenzyme and activated by proteolytic removal of the inhibitory propeptide.

The enzyme catalyses Endopeptidase of broad specificity, hydrolyzing substrates of both cathepsin L and cathepsin B.. Cysteine protease that plays an essential role in host liquefaction to facilitate horizontal transmission of the virus. May participate in the degradation of foreign protein expressed by the baculovirus system. The protein is Viral cathepsin (VCATH) of Lepidoptera (butterflies and moths).